Here is a 120-residue protein sequence, read N- to C-terminus: Large ribosomal subunit protein eL8 (120 aa).

This sequence belongs to the eukaryotic ribosomal protein eL8 family. Part of the 50S ribosomal subunit. Probably part of the RNase P complex.

It is found in the cytoplasm. Functionally, multifunctional RNA-binding protein that recognizes the K-turn motif in ribosomal RNA, the RNA component of RNase P, box H/ACA, box C/D and box C'/D' sRNAs. The chain is Large ribosomal subunit protein eL8 from Methanosarcina acetivorans (strain ATCC 35395 / DSM 2834 / JCM 12185 / C2A).